Here is a 424-residue protein sequence, read N- to C-terminus: CinA-like protein (424 aa).

Belongs to the CinA family.

This is CinA-like protein from Shewanella amazonensis (strain ATCC BAA-1098 / SB2B).